The following is a 223-amino-acid chain: Voltage-dependent calcium channel gamma-1 subunit (223 aa).

The Cytoplasmic segment spans residues 1–10 (MSQTKTLKVR). A helical transmembrane segment spans residues 11–29 (VALLCILVGIVLALVAVVT). Residues 30–109 (DHWAVLSPHV…TQKEYSISAA (80 aa)) lie on the Extracellular side of the membrane. Asn-43 and Asn-80 each carry an N-linked (GlcNAc...) asparagine glycan. Cys-57 and Cys-81 are oxidised to a cystine. The helical transmembrane segment at 110-130 (AIAIFSLGFIIVGTLCALLSF) threads the bilayer. Residues 131-135 (RKKRD) are Cytoplasmic-facing. A helical membrane pass occupies residues 136 to 156 (YLLRPASMFYIFAGLCLSVSA). Residues 157–180 (EVMRQSVQRMVDSEHTAWIAHSLA) are Extracellular-facing. Residues 181–205 (WSFICACVAAALLLVGGLALLLLAL) traverse the membrane as a helical segment. Residues 206-223 (PRMPRDPWESCMDAEPEH) lie on the Cytoplasmic side of the membrane.

The protein belongs to the PMP-22/EMP/MP20 family. CACNG subfamily. Component of a calcium channel complex consisting of a pore-forming alpha subunit (CACNA1S) and the ancillary subunits CACNB1 or CACNB2, CACNG1 and CACNA2D1. The channel complex contains alpha, beta, gamma and delta subunits in a 1:1:1:1 ratio, i.e. it contains either CACNB1 or CACNB2. Post-translationally, N-glycosylated.

It is found in the cell membrane. The protein localises to the sarcolemma. Regulatory subunit of the voltage-gated calcium channel that gives rise to L-type calcium currents in skeletal muscle. Regulates channel inactivation kinetics. This is Voltage-dependent calcium channel gamma-1 subunit (CACNG1) from Bos taurus (Bovine).